The sequence spans 861 residues: Leucine--tRNA ligase (861 aa).

The short motif at 42-52 is the 'HIGH' region element; it reads PYPSGKLHMGH. Positions 618 to 622 match the 'KMSKS' region motif; that stretch reads KMSKS. An ATP-binding site is contributed by Lys621.

Belongs to the class-I aminoacyl-tRNA synthetase family.

It is found in the cytoplasm. The catalysed reaction is tRNA(Leu) + L-leucine + ATP = L-leucyl-tRNA(Leu) + AMP + diphosphate. The sequence is that of Leucine--tRNA ligase from Buchnera aphidicola subsp. Baizongia pistaciae (strain Bp).